The sequence spans 27 residues: Caerulein precursor fragment R7 (27 aa).

In terms of tissue distribution, expressed by the skin glands.

The protein resides in the secreted. Functionally, antimicrobial peptide. In Xenopus ruwenzoriensis (Uganda clawed frog), this protein is Caerulein precursor fragment R7.